A 372-amino-acid chain; its full sequence is Glutamate 5-kinase (372 aa).

K14 lines the ATP pocket. Residues S54, D141, and N153 each coordinate substrate. 173–174 lines the ATP pocket; that stretch reads TD. In terms of domain architecture, PUA spans 280-358; that stretch reads RGHVVIDAGA…GEIETVLGYM (79 aa).

The protein belongs to the glutamate 5-kinase family.

Its subcellular location is the cytoplasm. The catalysed reaction is L-glutamate + ATP = L-glutamyl 5-phosphate + ADP. The protein operates within amino-acid biosynthesis; L-proline biosynthesis; L-glutamate 5-semialdehyde from L-glutamate: step 1/2. Catalyzes the transfer of a phosphate group to glutamate to form L-glutamate 5-phosphate. This Burkholderia vietnamiensis (strain G4 / LMG 22486) (Burkholderia cepacia (strain R1808)) protein is Glutamate 5-kinase.